The chain runs to 500 residues: L-arabinose isomerase (500 aa).

Mn(2+)-binding residues include E306, E333, H350, and H450.

Belongs to the arabinose isomerase family. As to quaternary structure, homohexamer. Mn(2+) is required as a cofactor.

The enzyme catalyses beta-L-arabinopyranose = L-ribulose. It functions in the pathway carbohydrate degradation; L-arabinose degradation via L-ribulose; D-xylulose 5-phosphate from L-arabinose (bacterial route): step 1/3. In terms of biological role, catalyzes the conversion of L-arabinose to L-ribulose. This chain is L-arabinose isomerase, found in Escherichia coli O7:K1 (strain IAI39 / ExPEC).